The following is a 315-amino-acid chain: MPRTKIPKNSKRNREVANREEKVRLYELKMDSRLISIDSLETKFLSAVDHQVKTLLGQVQKELANLKMPEVLRLFEELDRFSDFKASDQTQLLASMSMSGSAIEGHAPSATGSRNDEEDSSIGASGGSILAAHTGSLLRSTKAMRTPGPLHSARARRARRSRSACGDLNILHSAKPPSISSSSSSSRNSRSKLRTPMASRAKAFSADRTPLKQKQMRSGSPTTPPMAFLRYPKPGEVALSKYGSPMVAQVMPDKFANVNIPIRNGVLSLRPKKLDADEVESNLLENLDEDTLNQIKTLHENLQMIVNKASQAVFK.

Disordered stretches follow at residues 103 to 126 (IEGHAPSATGSRNDEEDSSIGASG) and 138 to 226 (LRST…TPPM). Thr146 carries the phosphothreonine modification. Ser152 carries the post-translational modification Phosphoserine. Positions 153-162 (ARARRARRSR) are enriched in basic residues. Residue Ser163 is modified to Phosphoserine. Over residues 178–188 (SISSSSSSSRN) the composition is skewed to low complexity. A Phosphoserine modification is found at Ser205. The residue at position 209 (Thr209) is a Phosphothreonine. Residues Ser218, Ser220, and Ser244 each carry the phosphoserine modification.

It belongs to the borealin family. In terms of assembly, component of the CPC complex. In terms of tissue distribution, ubiquitously expressed in the early embryo. Expression is restricted to the ventral nerve cord and brain during later embryonic stages.

The protein localises to the nucleus. It localises to the chromosome. Its subcellular location is the centromere. The protein resides in the cytoplasm. It is found in the cytoskeleton. The protein localises to the spindle. In terms of biological role, component of the chromosomal passenger complex (CPC), a complex that acts as a key regulator of embryonic mitosis. The CPC complex has essential functions at the centromere for ensuring sister chromatid cohesion, recruitment of the CPC to kinetochores, and chromosome alignment and segregation. There is no function in meiotic histone phosphorylation or spindle formation. The sequence is that of Borealin (borr) from Drosophila melanogaster (Fruit fly).